The chain runs to 316 residues: Transcription initiation factor IIB (316 aa).

The TFIIB-type zinc-finger motif lies at 11-42 (PKVTCPNHPDALLVEDYRAGDMICSECGLVVG). Zn(2+) contacts are provided by Cys-15, His-18, Cys-34, and Cys-37. Repeat copies occupy residues 124-200 (MSDR…LILK) and 218-294 (FCSN…LIYP).

It belongs to the TFIIB family.

It localises to the nucleus. It is found in the chromosome. It catalyses the reaction L-lysyl-[protein] + acetyl-CoA = N(6)-acetyl-L-lysyl-[protein] + CoA + H(+). Its function is as follows. General transcription factor that plays a role in transcription initiation by RNA polymerase II (Pol II). Involved in the pre-initiation complex (PIC) formation and Pol II recruitment at promoter DNA. Together with the TATA box-bound TBP forms the core initiation complex and provides a bridge between TBP and the Pol II-TFIIF complex. Released from the PIC early following the onset of transcription during the initiation and elongation transition and reassociates with TBP during the next transcription cycle. Associates with chromatin to core promoter-specific regions. Binds to two distinct DNA core promoter consensus sequence elements in a TBP-independent manner; these IIB-recognition elements (BREs) are localized immediately upstream (BREu), 5'-[GC][GC][GA]CGCC-3', and downstream (BREd), 5'-[GA]T[TGA][TG][GT][TG][TG]-3', of the TATA box element. Modulates transcription start site selection. Also exhibits autoacetyltransferase activity that contributes to the activated transcription. In Xenopus laevis (African clawed frog), this protein is Transcription initiation factor IIB.